A 185-amino-acid polypeptide reads, in one-letter code: Biogenesis of lysosome-related organelles complex 1 subunit 5 (185 aa).

Residues 1-25 (MSGGGTETPVACDAAQGGKKRDSLG) are disordered. N-acetylserine is present on Ser-2.

This sequence belongs to the BLOC1S5 family. As to quaternary structure, octamer composed of one copy each BLOC1S1, BLOC1S2, BLOC1S3, BLOC1S4, BLOC1S5, BLOC1S6, DTNBP1/BLOC1S7 and SNAPIN/BLOC1S8. Component of the biogenesis of lysosome-related organelles complex 1 (BLOC-1) composed of BLOC1S1, BLOC1S2, BLOC1S3, BLOC1S4, BLOC1S5, BLOC1S6, DTNBP1/BLOC1S7 and SNAPIN/BLOC1S8. The BLOC-1 complex associates with the AP-3 protein complex and membrane protein cargos. Interacts with BLOC1S4, BLOC1S6, DTNBP1/BLOC1S7 and PI4K2A. Detected in heart, brain, spleen, lung, kidney and testis.

Functionally, component of the BLOC-1 complex, a complex that is required for normal biogenesis of lysosome-related organelles (LRO), such as platelet dense granules and melanosomes. In concert with the AP-3 complex, the BLOC-1 complex is required to target membrane protein cargos into vesicles assembled at cell bodies for delivery into neurites and nerve terminals. The BLOC-1 complex, in association with SNARE proteins, is also proposed to be involved in neurite extension. Plays a role in intracellular vesicle trafficking. In Mus musculus (Mouse), this protein is Biogenesis of lysosome-related organelles complex 1 subunit 5 (Bloc1s5).